The sequence spans 141 residues: Large ribosomal subunit protein uL11 (141 aa).

This sequence belongs to the universal ribosomal protein uL11 family. Part of the ribosomal stalk of the 50S ribosomal subunit. Interacts with L10 and the large rRNA to form the base of the stalk. L10 forms an elongated spine to which L12 dimers bind in a sequential fashion forming a multimeric L10(L12)X complex. One or more lysine residues are methylated.

In terms of biological role, forms part of the ribosomal stalk which helps the ribosome interact with GTP-bound translation factors. This chain is Large ribosomal subunit protein uL11, found in Trichodesmium erythraeum (strain IMS101).